The chain runs to 115 residues: MSLPRHTLAIQALYRRVLKLHRKLPLEIKALGDQYAKDEFRRHKKASQEQAVRFMQEWKIYADTIEQQVNSQQLNVLGKDLKDEHIESLTEEQLGQLYSLQEAALKPDSSEPRDI.

The protein belongs to the complex I LYR family. SDHAF3 subfamily. In terms of assembly, interacts with the iron-sulfur protein subunit within the SDH catalytic dimer.

It is found in the mitochondrion matrix. Its function is as follows. Plays an essential role in the assembly of succinate dehydrogenase (SDH), an enzyme complex (also referred to as respiratory complex II) that is a component of both the tricarboxylic acid (TCA) cycle and the mitochondrial electron transport chain, and which couples the oxidation of succinate to fumarate with the reduction of ubiquinone (coenzyme Q) to ubiquinol. Promotes maturation of the iron-sulfur protein subunit of the SDH catalytic dimer, protecting it from the deleterious effects of oxidants. May act together with SDHAF1. The chain is Succinate dehydrogenase assembly factor 3, mitochondrial (acn9) from Nematostella vectensis (Starlet sea anemone).